The sequence spans 211 residues: MANSNTNQLHPLGATTSQTFTTALNHTAASTIAINFRELIKEPKELDEASNYLYQALLDDVVAGIFIETHHLRKTGNLAALDGVGEENLESAFHICEMPNLDIFGISTAKKQMDCTCPNCDRLVAAARFAPHLEKCMGMGRISSRIASRRLATKEGSSASTSSTSTYLQSGGNTGGTDDEDDVDWSSDKRKKKSTQSSRNNGSKKNNGKTF.

The segment at 115-136 (CTCPNCDRLVAAARFAPHLEKC) adopts an SGF11-type zinc-finger fold. A disordered region spans residues 149-211 (RRLATKEGSS…GSKKNNGKTF (63 aa)). Residues 157-166 (SSASTSSTST) are compositionally biased toward low complexity. Serine 187 is modified (phosphoserine). The segment covering 197–211 (SSRNNGSKKNNGKTF) has biased composition (low complexity).

It belongs to the SGF11 family. Component of some SAGA transcription coactivator-HAT complexes, at least composed of Ada2b, not/nonstop, Pcaf/Gcn5, Sgf11 and Spt3. Within the SAGA complex, Sgf11, e(y)2, and not/nonstop form an additional subcomplex of SAGA called the DUB module (deubiquitination module). Interacts directly with not/nonstop. Interacts with the AMEX complex component xmas-2. Interacts with Cbp80; important for promoter recruitment of Sgf11 that is not associated with the DUB module.

It localises to the nucleus. The protein localises to the nucleoplasm. The protein resides in the cytoplasm. Component of the transcription regulatory histone acetylation (HAT) complex SAGA, a multiprotein complex that activates transcription by remodeling chromatin and mediating histone acetylation and deubiquitination. Within the SAGA complex, participates in a subcomplex that specifically deubiquitinates histone H2B. The SAGA complex is recruited to specific gene promoters by activators, where it is required for transcription. Required for nuclear receptor-mediated transactivation. Binds independently on SAGA to promoters in an RNA-dependent manner. Binds to mRNA and is essential for total mRNA export from the nucleus. Required to counteract heterochromatin silencing. Controls the development of neuronal connectivity in visual system by being required for accurate axon targeting in the optic lobe. Required for expression of ecdysone-induced genes such as br/broad. This Drosophila grimshawi (Hawaiian fruit fly) protein is SAGA-associated factor 11 homolog 1.